A 387-amino-acid polypeptide reads, in one-letter code: Galactokinase (387 aa).

A substrate-binding site is contributed by 33 to 36 (EHTD). ATP contacts are provided by residues serine 67 and 124-130 (GAGLSSS). 2 residues coordinate Mg(2+): serine 130 and glutamate 162. The active-site Proton acceptor is the aspartate 174. Tyrosine 224 is a binding site for substrate.

It belongs to the GHMP kinase family. GalK subfamily.

The protein localises to the cytoplasm. It catalyses the reaction alpha-D-galactose + ATP = alpha-D-galactose 1-phosphate + ADP + H(+). It functions in the pathway carbohydrate metabolism; galactose metabolism. Functionally, catalyzes the transfer of the gamma-phosphate of ATP to D-galactose to form alpha-D-galactose-1-phosphate (Gal-1-P). This is Galactokinase from Lactiplantibacillus plantarum (strain ATCC BAA-793 / NCIMB 8826 / WCFS1) (Lactobacillus plantarum).